Here is a 459-residue protein sequence, read N- to C-terminus: Chromosomal replication initiator protein DnaA (459 aa).

The interval 1 to 73 (MEIPIESLWS…AHAVQDILGH (73 aa)) is domain I, interacts with DnaA modulators. The domain II stretch occupies residues 73-117 (HPVGIYITVAQGDEVSHFSEREVSWESTNPSSIPESLPHHNHKTT). The interval 118-334 (ELNSKYVFSR…GALIRAVAYI (217 aa)) is domain III, AAA+ region. Residues glycine 162, glycine 164, lysine 165, and threonine 166 each contribute to the ATP site. Positions 335-459 (SIWGLPMTVE…INMTSRSQKS (125 aa)) are domain IV, binds dsDNA.

The protein belongs to the DnaA family. In terms of assembly, oligomerizes as a right-handed, spiral filament on DNA at oriC.

It localises to the cytoplasm. Its function is as follows. Plays an essential role in the initiation and regulation of chromosomal replication. ATP-DnaA binds to the origin of replication (oriC) to initiate formation of the DNA replication initiation complex once per cell cycle. Binds the DnaA box (a 9 base pair repeat at the origin) and separates the double-stranded (ds)DNA. Forms a right-handed helical filament on oriC DNA; dsDNA binds to the exterior of the filament while single-stranded (ss)DNA is stabiized in the filament's interior. The ATP-DnaA-oriC complex binds and stabilizes one strand of the AT-rich DNA unwinding element (DUE), permitting loading of DNA polymerase. After initiation quickly degrades to an ADP-DnaA complex that is not apt for DNA replication. Binds acidic phospholipids. This Nostoc punctiforme (strain ATCC 29133 / PCC 73102) protein is Chromosomal replication initiator protein DnaA.